The chain runs to 257 residues: Adenylate kinase (257 aa).

52–57 (GAGKGT) is an ATP binding site. The tract at residues 72-101 (ATGDMLRSQVAKKTELGKEAKKIMDQGGLV) is NMP. AMP is bound by residues T73, R78, 99–101 (GLV), 128–131 (GFPR), and Q135. The interval 169–206 (GRLVHPASGRSYHKIFNPPKNDMKDDVTGEPLIQRSDD) is LID. Residues R170 and 179 to 180 (SY) each bind ATP. Positions 203 and 214 each coordinate AMP. Q242 contacts ATP.

This sequence belongs to the adenylate kinase family. AK2 subfamily. Monomer.

Its subcellular location is the cytoplasm. It localises to the cytosol. The protein localises to the mitochondrion intermembrane space. The enzyme catalyses AMP + ATP = 2 ADP. Its function is as follows. Catalyzes the reversible transfer of the terminal phosphate group between ATP and AMP. Plays an important role in cellular energy homeostasis and in adenine nucleotide metabolism. Adenylate kinase activity is critical for regulation of the phosphate utilization and the AMP de novo biosynthesis pathways. This is Adenylate kinase (adk1) from Neosartorya fischeri (strain ATCC 1020 / DSM 3700 / CBS 544.65 / FGSC A1164 / JCM 1740 / NRRL 181 / WB 181) (Aspergillus fischerianus).